A 1163-amino-acid chain; its full sequence is AF4/FMR2 family member 4 (1163 aa).

The segment covering 1-19 has biased composition (basic and acidic residues); it reads MNREDRNVLRMKERERRNQ. Disordered stretches follow at residues 1-48, 76-312, 324-904, and 1034-1073; these read MNRE…EDKL, AIPK…ASGD, THSW…PRRT, and NSYN…SSGA. A compositionally biased stretch (polar residues) spans 115-128; that stretch reads PSTSQSQKRSSGLQ. The residue at position 120 (Ser120) is a Phosphoserine. Composition is skewed to low complexity over residues 129 to 148 and 177 to 194; these read SGHS…NSSG and RSSS…NSSH. Residues 198 to 217 show a composition bias toward basic and acidic residues; sequence HGNDHHSKEHQRSKSPRDPD. At Ser212 the chain carries Phosphoserine. 3 stretches are compositionally biased toward polar residues: residues 227-251, 273-285, and 350-375; these read PFSS…SMLQ, EHYS…NSMT, and KESQ…NGHQ. 4 positions are modified to phosphoserine: Ser387, Ser388, Ser389, and Ser392. Residues 403 to 412 show a composition bias toward polar residues; sequence PRSTPGSNSE. A compositionally biased stretch (basic and acidic residues) spans 413–429; sequence PSHHNSEGADNSRDDSS. The span at 430-462 shows a compositional bias: low complexity; that stretch reads SHSGSESSSGSDSESESSSSDSEANEPSQSASP. Residues Ser487, Ser490, and Ser491 each carry the phosphoserine modification. Composition is skewed to polar residues over residues 488–501, 510–528, and 549–560; these read PASS…SSQG, GTGN…SSAT, and SPAQSDSTTQRR. Phosphoserine is present on Ser549. Positions 568–586 are enriched in basic and acidic residues; that stretch reads KKAEKAAAEEPRGGLKIES. Residue Lys583 forms a Glycyl lysine isopeptide (Lys-Gly) (interchain with G-Cter in SUMO2) linkage. A compositionally biased stretch (basic residues) spans 599–612; that stretch reads SRHKAATKGSRKPN. Positions 613 to 627 are enriched in basic and acidic residues; it reads IKKESKSSPRPTAEK. The residue at position 671 (Ser671) is a Phosphoserine. Thr674 bears the Phosphothreonine mark. Phosphoserine is present on residues Ser680, Ser694, Ser703, and Ser706. Tyr712 is subject to Phosphotyrosine. 3 stretches are compositionally biased toward basic and acidic residues: residues 730–761, 769–789, and 799–811; these read PYKE…EKVS, KNED…DKNS, and ESSK…EKDL. A Phosphoserine modification is found at Ser814. Residue Lys822 is modified to N6-acetyllysine. Phosphoserine is present on residues Ser836, Ser1043, Ser1055, Ser1058, and Ser1062. Over residues 836 to 862 the composition is skewed to low complexity; it reads SQSSSLKSSSNSNKETSGSSKNSSSTS. Low complexity predominate over residues 1062-1073; the sequence is SPGNSGNYSSGA.

The protein belongs to the AF4 family. In terms of assembly, component of the super elongation complex (SEC), at least composed of EAF1, EAF2, CDK9, MLLT3/AF9, AFF (AFF1 or AFF4), the P-TEFb complex and ELL (ELL, ELL2 or ELL3). Interacts with ELL3; the interaction is direct. Interacts with ELL2; the interaction is direct and leads to stabilize ELL2 and prevent ELL2 ubiquitination and degradation. Dephosphorylated at Ser-549 by the PNUTS-PP1 complex, promoting RNA polymerase II transcription pause-release. Ubiquitously expressed. Strongly expressed in heart, placenta, skeletal muscle, pancreas and to a lower extent in brain.

Its subcellular location is the nucleus. It is found in the chromosome. Functionally, key component of the super elongation complex (SEC), a complex required to increase the catalytic rate of RNA polymerase II transcription by suppressing transient pausing by the polymerase at multiple sites along the DNA. In the SEC complex, AFF4 acts as a central scaffold that recruits other factors through direct interactions with ELL proteins (ELL, ELL2 or ELL3) and the P-TEFb complex. In case of infection by HIV-1 virus, the SEC complex is recruited by the viral Tat protein to stimulate viral gene expression. This Homo sapiens (Human) protein is AF4/FMR2 family member 4 (AFF4).